The primary structure comprises 216 residues: Cytidylate kinase (216 aa).

G7 to T15 contributes to the ATP binding site.

Belongs to the cytidylate kinase family. Type 1 subfamily.

The protein resides in the cytoplasm. It catalyses the reaction CMP + ATP = CDP + ADP. It carries out the reaction dCMP + ATP = dCDP + ADP. The protein is Cytidylate kinase of Chlamydia muridarum (strain MoPn / Nigg).